Reading from the N-terminus, the 255-residue chain is Triosephosphate isomerase (255 aa).

Residue 9–11 coordinates substrate; that stretch reads NWK. The active-site Electrophile is the histidine 95. Glutamate 167 (proton acceptor) is an active-site residue. Substrate is bound by residues glycine 173, serine 212, and 233-234; that span reads GG.

Belongs to the triosephosphate isomerase family. As to quaternary structure, homodimer.

The protein resides in the cytoplasm. It carries out the reaction D-glyceraldehyde 3-phosphate = dihydroxyacetone phosphate. It functions in the pathway carbohydrate biosynthesis; gluconeogenesis. The protein operates within carbohydrate degradation; glycolysis; D-glyceraldehyde 3-phosphate from glycerone phosphate: step 1/1. Involved in the gluconeogenesis. Catalyzes stereospecifically the conversion of dihydroxyacetone phosphate (DHAP) to D-glyceraldehyde-3-phosphate (G3P). This chain is Triosephosphate isomerase, found in Sodalis glossinidius (strain morsitans).